The sequence spans 190 residues: Threonylcarbamoyl-AMP synthase (190 aa).

Residues 7 to 190 (TGSSAAVVDL…ALTGELFRQG (184 aa)) enclose the YrdC-like domain.

This sequence belongs to the SUA5 family. TsaC subfamily.

Its subcellular location is the cytoplasm. It carries out the reaction L-threonine + hydrogencarbonate + ATP = L-threonylcarbamoyladenylate + diphosphate + H2O. Its function is as follows. Required for the formation of a threonylcarbamoyl group on adenosine at position 37 (t(6)A37) in tRNAs that read codons beginning with adenine. Catalyzes the conversion of L-threonine, HCO(3)(-)/CO(2) and ATP to give threonylcarbamoyl-AMP (TC-AMP) as the acyladenylate intermediate, with the release of diphosphate. In Salmonella typhi, this protein is Threonylcarbamoyl-AMP synthase.